We begin with the raw amino-acid sequence, 376 residues long: UDP-N-acetylglucosamine--N-acetylmuramyl-(pentapeptide) pyrophosphoryl-undecaprenol N-acetylglucosamine transferase (376 aa).

Residues 12–14 (TGG), Asn125, Arg165, Ser197, and Gln296 contribute to the UDP-N-acetyl-alpha-D-glucosamine site.

The protein belongs to the glycosyltransferase 28 family. MurG subfamily.

The protein resides in the cell inner membrane. The catalysed reaction is di-trans,octa-cis-undecaprenyl diphospho-N-acetyl-alpha-D-muramoyl-L-alanyl-D-glutamyl-meso-2,6-diaminopimeloyl-D-alanyl-D-alanine + UDP-N-acetyl-alpha-D-glucosamine = di-trans,octa-cis-undecaprenyl diphospho-[N-acetyl-alpha-D-glucosaminyl-(1-&gt;4)]-N-acetyl-alpha-D-muramoyl-L-alanyl-D-glutamyl-meso-2,6-diaminopimeloyl-D-alanyl-D-alanine + UDP + H(+). It participates in cell wall biogenesis; peptidoglycan biosynthesis. In terms of biological role, cell wall formation. Catalyzes the transfer of a GlcNAc subunit on undecaprenyl-pyrophosphoryl-MurNAc-pentapeptide (lipid intermediate I) to form undecaprenyl-pyrophosphoryl-MurNAc-(pentapeptide)GlcNAc (lipid intermediate II). This chain is UDP-N-acetylglucosamine--N-acetylmuramyl-(pentapeptide) pyrophosphoryl-undecaprenol N-acetylglucosamine transferase, found in Protochlamydia amoebophila (strain UWE25).